The primary structure comprises 220 residues: Avenin-3 (220 aa).

A signal peptide spans 1–19; it reads MKTFLIFALLAMAATMATA. At Gln20 the chain carries Pyrrolidone carboxylic acid. Tandem repeats lie at residues 41 to 48 and 49 to 56. Positions 41–56 are 2 X 8 AA tandem repeats of Q-Q-M-L-L-Q-Q-Q; the sequence is QQMLLQQQQQMLLQQQ. Cystine bridges form between Cys69-Cys202, Cys77-Cys96, Cys103-Cys104, and Cys116-Cys210. One copy of the 2-1 repeat lies at 128–137; sequence MQQQQFFQPQ. Positions 128 to 146 are 2 X 10 AA tandem repeats of M-Q-Q-Q-Q-F-F-Q-P-Q; it reads MQQQQFFQPQMQQQFFQPQ. The stretch at 138-146 is one 2-2; approximate repeat; the sequence is MQQQFFQPQ.

The protein belongs to the gliadin/glutenin family. Monomer.

It is found in the vacuole. Functionally, seed storage protein. Serves as a source of nitrogen, carbon, and sulfur for the young developing seedling. This is Avenin-3 from Avena sativa (Oat).